An 841-amino-acid polypeptide reads, in one-letter code: Putative helicase R592 (841 aa).

The Helicase ATP-binding domain occupies 72 to 309 (STFVIETNSA…RRYVNKIFGQ (238 aa)). 85–92 (DKVGAGKT) is an ATP binding site. The span at 195 to 205 (KLPVKTTKKGG) shows a compositional bias: basic residues. The interval 195 to 215 (KLPVKTTKKGGSKTQNKAQND) is disordered. Over residues 206–215 (SKTQNKAQND) the composition is skewed to polar residues. The DEAD box signature appears at 266-269 (DEMD). A coiled-coil region spans residues 413–450 (QDVDAHENRKKNIMNNIARCKTKLESIKEKINSIKDEC). An RING-type; degenerate zinc finger spans residues 451-491 (CFICTDPFENPTIMNCCKSIFCLKCLLTTLKTVGSKCPYCR). The region spanning 531–682 (VLEQVLSYIS…WMITNPTDLN (152 aa)) is the Helicase C-terminal domain. The tract at residues 678 to 841 (PTDLNEEPDE…KAPVRKLIKV (164 aa)) is disordered. Residues 681-697 (LNEEPDEESDEGSDEDV) are compositionally biased toward acidic residues. The span at 698–725 (EKSKDKKSSDKKSSDKKKSEKKSSDKKS) shows a compositional bias: basic and acidic residues. Positions 726–749 (SNKKNSKKKTYVKPKSSKKTSQKV) are enriched in basic residues. Composition is skewed to acidic residues over residues 765–774 (DSDDLDDSDD) and 782–804 (SDSD…ESEI). Composition is skewed to basic residues over residues 809-821 (KSKK…KKNK) and 828-841 (TLKK…LIKV).

The chain is Putative helicase R592 from Acanthamoeba polyphaga mimivirus (APMV).